Consider the following 353-residue polypeptide: Protein O-mannose kinase (353 aa).

The Cytoplasmic segment spans residues 1 to 19 (MEKKAHFVKRDFPPREAPS). A helical; Signal-anchor for type II membrane protein membrane pass occupies residues 20-40 (LLLLLLVVAVLLLNALLYLYL). Residues 41-353 (GNLHGSSGRA…AAMPSTREML (313 aa)) lie on the Lumenal side of the membrane. A Protein kinase domain is found at 83–353 (VRKLKCVGEG…AAMPSTREML (271 aa)). Residues N163 and N237 are each glycosylated (N-linked (GlcNAc...) asparagine).

Belongs to the protein kinase superfamily. Ser/Thr protein kinase family. STKL subfamily.

Its subcellular location is the endoplasmic reticulum membrane. The catalysed reaction is 3-O-[beta-D-GalNAc-(1-&gt;3)-beta-D-GlcNAc-(1-&gt;4)-alpha-D-Man]-L-Thr-[protein] + ATP = 3-O-[beta-D-GalNAc-(1-&gt;3)-beta-D-GlcNAc-(1-&gt;4)-(O-6-P-alpha-D-Man)]-Thr-[protein] + ADP + H(+). Protein O-mannose kinase that specifically mediates phosphorylation at the 6-position of an O-mannose of the trisaccharide (N-acetylgalactosamine (GalNAc)-beta-1,3-N-acetylglucosamine (GlcNAc)-beta-1,4-mannose) to generate phosphorylated O-mannosyl trisaccharide (N-acetylgalactosamine-beta-1,3-N-acetylglucosamine-beta-1,4-(phosphate-6-)mannose). Phosphorylated O-mannosyl trisaccharide is a carbohydrate structure present in alpha-dystroglycan (DAG1), which is required for binding laminin G-like domain-containing extracellular proteins with high affinity. Only shows kinase activity when the GalNAc-beta-3-GlcNAc-beta-terminus is linked to the 4-position of O-mannose, suggesting that this disaccharide serves as the substrate recognition motif. This is Protein O-mannose kinase (POMK) from Gallus gallus (Chicken).